The chain runs to 307 residues: Probable acetylxylan esterase A (307 aa).

Positions 1–19 (MILLSYLLTYLLCALTCSA) are cleaved as a signal peptide. S150 acts as the Charge relay system in catalysis. N192 and N270 each carry an N-linked (GlcNAc...) asparagine glycan.

Belongs to the carbohydrate esterase 1 (CE1) family. AxeA subfamily. In terms of assembly, monomer.

It is found in the secreted. It carries out the reaction Deacetylation of xylans and xylo-oligosaccharides.. The protein operates within glycan degradation; xylan degradation. Its function is as follows. Acetylxylan esterase involved in the hydrolysis of xylan, a major structural heterogeneous polysaccharide found in plant biomass representing the second most abundant polysaccharide in the biosphere, after cellulose. Degrades acetylated xylans by cleaving acetyl side groups from the hetero-xylan backbone. The chain is Probable acetylxylan esterase A (axeA) from Aspergillus flavus.